The primary structure comprises 576 residues: 5'-nucleotidase (576 aa).

The signal sequence occupies residues 1 to 28 (MRPAAATAPKWLLLALSALLPLWPTAKS). 2 residues coordinate Zn(2+): Asp-38 and His-40. A disulfide bond links Cys-53 and Cys-59. A glycan (N-linked (GlcNAc...) asparagine) is linked at Asn-55. 4 residues coordinate Zn(2+): Asp-87, Asn-119, His-222, and His-245. 3 N-linked (GlcNAc...) asparagine glycosylation sites follow: Asn-313, Asn-335, and Asn-349. Cystine bridges form between Cys-355–Cys-360 and Cys-367–Cys-389. Residue Arg-356 participates in AMP binding. Arg-356 lines the IMP pocket. Asn-392 and Arg-397 together coordinate AMP. IMP contacts are provided by Asn-392 and Arg-397. Asn-405 carries N-linked (GlcNAc...) asparagine glycosylation. Residue Phe-419 coordinates AMP. Phe-419 contacts IMP. Cys-478 and Cys-481 form a disulfide bridge. Tyr-502 and Asp-508 together coordinate AMP. 2 residues coordinate IMP: Tyr-502 and Asp-508. A lipid anchor (GPI-anchor amidated serine) is attached at Ser-551. The propeptide at 552 to 576 (AASHYQGSFPLIILSFWAVILVLYQ) is removed in mature form.

This sequence belongs to the 5'-nucleotidase family. As to quaternary structure, homodimer. It depends on Zn(2+) as a cofactor. As to expression, expressed in the brain.

It is found in the cell membrane. It carries out the reaction a ribonucleoside 5'-phosphate + H2O = a ribonucleoside + phosphate. The catalysed reaction is a 2'-deoxyribonucleoside 5'-phosphate + H2O = a 2'-deoxyribonucleoside + phosphate. The enzyme catalyses dTMP + H2O = thymidine + phosphate. It catalyses the reaction CMP + H2O = cytidine + phosphate. It carries out the reaction IMP + H2O = inosine + phosphate. The catalysed reaction is AMP + H2O = adenosine + phosphate. The enzyme catalyses GMP + H2O = guanosine + phosphate. It catalyses the reaction UMP + H2O = uridine + phosphate. It carries out the reaction dAMP + H2O = 2'-deoxyadenosine + phosphate. The catalysed reaction is dCMP + H2O = 2'-deoxycytidine + phosphate. Functionally, catalyzes the hydrolysis of nucleotide monophosphates, releasing inorganic phosphate and the corresponding nucleoside. AMP is the preferred substrate but can also hydrolyze CMP and GMP. Shows a preference for ribonucleotide monophosphates over their equivalent deoxyribose forms. Other substrates include IMP, UMP, dAMP, dCMP, dTMP, NAD and NMN. The chain is 5'-nucleotidase (Nt5e) from Rattus norvegicus (Rat).